Here is a 917-residue protein sequence, read N- to C-terminus: Transcriptional regulatory protein SEF1 (917 aa).

Positions 1–88 (MKFEKGKVRI…SKPTGHRPVT (88 aa)) are disordered. Residues 13–27 (KPSPTPTNPQTPLPL) show a composition bias toward pro residues. The segment covering 56–70 (SNSTASTPNSATPTS) has biased composition (low complexity). The segment covering 71 to 81 (VGTPPQKTSKP) has biased composition (polar residues). Residues 90–120 (CTFCRQHKIKCNASDNYPNPCERCKKMGLKC) constitute a DNA-binding region (zn(2)-C6 fungal-type). Positions 129–164 (RKGSQIQSLKSDVDELKAKIEMLTKNESLLTQALNQ) form a coiled coil. Disordered regions lie at residues 168 to 212 (NHAS…ASPI) and 778 to 849 (QQYP…PFIL). The span at 171 to 184 (SQQQQSSGSQSQQQ) shows a compositional bias: low complexity. The span at 191 to 212 (RALSYTSANSSPQVAFSNASPI) shows a compositional bias: polar residues. The span at 778-827 (QQYPMQQDQQQQEPSQQQQQKHSQQSQQYQQQQQSNQQQPHLQHQRQFQQ) shows a compositional bias: low complexity.

As to quaternary structure, interacts with SSN3 and SFU1. Post-translationally, phosphorylated by SSN3 under iron-depleted conditions which leads to nuclear localization.

The protein localises to the cytoplasm. It is found in the nucleus. In terms of biological role, transcription factor which plays an essential role in virulence by activating the transcription of iron uptake genes such as FRE7 in iron-poor environments such as the host bloodstream and internal organs. Promotes commensalism in a mouse model of gastrointestinal infection. The protein is Transcriptional regulatory protein SEF1 (SEF1) of Candida albicans (strain SC5314 / ATCC MYA-2876) (Yeast).